The chain runs to 446 residues: Signal recognition particle 54 kDa protein (446 aa).

GTP-binding positions include 103–110, 185–189, and 245–248; these read GVQGTGKT, DTAGR, and TKMD.

Belongs to the GTP-binding SRP family. SRP54 subfamily. In terms of assembly, part of the signal recognition particle protein translocation system, which is composed of SRP and FtsY. Archaeal SRP consists of a 7S RNA molecule of 300 nucleotides and two protein subunits: SRP54 and SRP19.

Its subcellular location is the cytoplasm. The enzyme catalyses GTP + H2O = GDP + phosphate + H(+). Its function is as follows. Involved in targeting and insertion of nascent membrane proteins into the cytoplasmic membrane. Binds to the hydrophobic signal sequence of the ribosome-nascent chain (RNC) as it emerges from the ribosomes. The SRP-RNC complex is then targeted to the cytoplasmic membrane where it interacts with the SRP receptor FtsY. The sequence is that of Signal recognition particle 54 kDa protein from Metallosphaera sedula (strain ATCC 51363 / DSM 5348 / JCM 9185 / NBRC 15509 / TH2).